Consider the following 279-residue polypeptide: 3-methyl-2-oxobutanoate hydroxymethyltransferase (279 aa).

Residues Asp49 and Asp88 each coordinate Mg(2+). 3-methyl-2-oxobutanoate is bound by residues 49-50, Asp88, and Lys118; that span reads DS. Glu120 lines the Mg(2+) pocket. Glu187 acts as the Proton acceptor in catalysis.

The protein belongs to the PanB family. Homodecamer; pentamer of dimers. Mg(2+) serves as cofactor.

The protein resides in the cytoplasm. It catalyses the reaction 3-methyl-2-oxobutanoate + (6R)-5,10-methylene-5,6,7,8-tetrahydrofolate + H2O = 2-dehydropantoate + (6S)-5,6,7,8-tetrahydrofolate. Its pathway is cofactor biosynthesis; (R)-pantothenate biosynthesis; (R)-pantoate from 3-methyl-2-oxobutanoate: step 1/2. In terms of biological role, catalyzes the reversible reaction in which hydroxymethyl group from 5,10-methylenetetrahydrofolate is transferred onto alpha-ketoisovalerate to form ketopantoate. The polypeptide is 3-methyl-2-oxobutanoate hydroxymethyltransferase (Agrobacterium fabrum (strain C58 / ATCC 33970) (Agrobacterium tumefaciens (strain C58))).